The following is a 503-amino-acid chain: Long-chain-aldehyde dehydrogenase (503 aa).

218-224 (GYGAEVG) contacts NAD(+). Residues E262 and C301 contribute to the active site.

Belongs to the aldehyde dehydrogenase family. As to quaternary structure, homotetramer.

The catalysed reaction is a long-chain fatty aldehyde + NAD(+) + H2O = a long-chain fatty acid + NADH + 2 H(+). Completely inhibited by p-chloromercuribenzoate and N-ethylmaleimide. Strongly inhibited by iodoacetate. Inhibited by Pb(2+), Fe(3+), Ag(+) and Hg(2+) and partially inhibited by several other metal ions Mn(2+), Zn(2+) and Cu(2+). Functionally, aldehyde dehydrogenase that shows activity toward n-alkanals (C(4) to C(14)), with a preference for longer carbon chains. The best substrate is tetradecanal. This is Long-chain-aldehyde dehydrogenase (ald1) from Acinetobacter sp.